Here is an 86-residue protein sequence, read N- to C-terminus: Large ribosomal subunit protein eL43 (86 aa).

Residues C38, C41, C57, and C60 each contribute to the Zn(2+) site. A C4-type zinc finger spans residues 38–60; that stretch reads CPFCGSTGTVRRVSVGVWSCRKC.

Belongs to the eukaryotic ribosomal protein eL43 family. Putative zinc-binding subfamily. As to quaternary structure, part of the 50S ribosomal subunit. Requires Zn(2+) as cofactor.

In terms of biological role, binds to the 23S rRNA. The polypeptide is Large ribosomal subunit protein eL43 (Aeropyrum pernix (strain ATCC 700893 / DSM 11879 / JCM 9820 / NBRC 100138 / K1)).